The primary structure comprises 177 residues: DELTA-stichotoxin-Hmg2b (177 aa).

Positions 3-12 (ALAGTIIAGA) are plays an important role in the hemolytic activity. The segment at 11–30 (GASLGFQILDKVLGELGKVS) is N-terminal region. Phosphocholine-binding residues include Ser54, Val87, Ser105, Pro107, Tyr133, Tyr137, and Tyr138.

This sequence belongs to the actinoporin family. Sea anemone subfamily. In terms of assembly, octamer or nonamer in membranes. Monomer in the soluble state.

It is found in the secreted. The protein localises to the nematocyst. The protein resides in the target cell membrane. In terms of biological role, pore-forming protein that forms cations-selective hydrophilic pores of around 1 nm and causes cytolysis. Pore formation is a multi-step process that involves specific recognition of membrane sphingomyelin (but neither cholesterol nor phosphatidylcholine) using aromatic rich region and adjacent phosphocholine (POC) binding site, firm binding to the membrane (mainly driven by hydrophobic interactions) accompanied by the transfer of the N-terminal region to the lipid-water interface and finally pore formation after oligomerization of monomers This toxin shows hemolytic activity. This is DELTA-stichotoxin-Hmg2b from Heteractis magnifica (Magnificent sea anemone).